We begin with the raw amino-acid sequence, 564 residues long: Laccase-22 (564 aa).

Residues 1–25 (MAVLPESRRLSLLLMAACFLLQALS) form the signal peptide. Plastocyanin-like domains lie at 36 to 152 (NVVM…PKLG) and 162 to 314 (KEAV…YANT). Asparagine 41 and asparagine 82 each carry an N-linked (GlcNAc...) asparagine glycan. Cu cation contacts are provided by histidine 86 and histidine 88. N-linked (GlcNAc...) asparagine glycosylation is present at asparagine 118. Cu cation contacts are provided by histidine 131 and histidine 133. Asparagine 191, asparagine 302, asparagine 331, asparagine 379, asparagine 389, asparagine 424, asparagine 437, and asparagine 447 each carry an N-linked (GlcNAc...) asparagine glycan. The 135-residue stretch at 414–548 (DFPATPLHKF…KMAFVVDNGK (135 aa)) folds into the Plastocyanin-like 3 domain. Residues histidine 465, histidine 468, histidine 470, histidine 527, cysteine 528, histidine 529, and histidine 533 each coordinate Cu cation.

Belongs to the multicopper oxidase family. It depends on Cu cation as a cofactor.

The protein resides in the secreted. Its subcellular location is the extracellular space. The protein localises to the apoplast. The catalysed reaction is 4 hydroquinone + O2 = 4 benzosemiquinone + 2 H2O. Functionally, lignin degradation and detoxification of lignin-derived products. This chain is Laccase-22 (LAC22), found in Oryza sativa subsp. japonica (Rice).